The sequence spans 258 residues: Indole-3-glycerol phosphate synthase (258 aa).

This sequence belongs to the TrpC family.

The catalysed reaction is 1-(2-carboxyphenylamino)-1-deoxy-D-ribulose 5-phosphate + H(+) = (1S,2R)-1-C-(indol-3-yl)glycerol 3-phosphate + CO2 + H2O. It participates in amino-acid biosynthesis; L-tryptophan biosynthesis; L-tryptophan from chorismate: step 4/5. The polypeptide is Indole-3-glycerol phosphate synthase (Geobacillus sp. (strain WCH70)).